The primary structure comprises 257 residues: Type III pantothenate kinase (257 aa).

6–13 contacts ATP; it reads DSGNTNTV. 108 to 111 is a substrate binding site; the sequence is GADR. Catalysis depends on D110, which acts as the Proton acceptor. D130 contacts K(+). T133 lines the ATP pocket. Residue T185 coordinates substrate.

This sequence belongs to the type III pantothenate kinase family. In terms of assembly, homodimer. It depends on NH4(+) as a cofactor. Requires K(+) as cofactor.

It localises to the cytoplasm. The enzyme catalyses (R)-pantothenate + ATP = (R)-4'-phosphopantothenate + ADP + H(+). It participates in cofactor biosynthesis; coenzyme A biosynthesis; CoA from (R)-pantothenate: step 1/5. Catalyzes the phosphorylation of pantothenate (Pan), the first step in CoA biosynthesis. The chain is Type III pantothenate kinase from Rhodospirillum rubrum (strain ATCC 11170 / ATH 1.1.1 / DSM 467 / LMG 4362 / NCIMB 8255 / S1).